A 2595-amino-acid polypeptide reads, in one-letter code: Glucosylceramide transporter ABCA12 (2595 aa).

Residues 23–43 (PLWTLVLILWPVIIFIILAIT) form a helical membrane-spanning segment. Residues N156, N174, N214, N275, N333, N367, N383, N412, N435, N528, N543, N577, N608, N623, N648, N752, N826, N920, and N963 are each glycosylated (N-linked (GlcNAc...) asparagine). Transmembrane regions (helical) follow at residues 1065 to 1085 (VSYS…AAFV), 1112 to 1132 (FAWL…LIII), and 1145 to 1165 (FILF…SYLI). A glycan (N-linked (GlcNAc...) asparagine) is linked at N1170. Transmembrane regions (helical) follow at residues 1174-1194 (IAAL…IVLV), 1200-1220 (LSYV…SYAS), and 1250-1270 (FGWL…IAWY). Residues 1346–1577 (VALHGVTKIY…FGDGYHLTLT (232 aa)) enclose the ABC transporter 1 domain. 1378–1385 (GPNGAGKT) is an ATP binding site. N1524, N1663, and N1704 each carry an N-linked (GlcNAc...) asparagine glycan. The chain crosses the membrane as a helical span at residues 1747–1767 (LIAQVILPIVFVTTAMGLGTL). Residues N1769, N1819, N1835, N1876, N1921, and N1952 are each glycosylated (N-linked (GlcNAc...) asparagine). 4 consecutive transmembrane segments (helical) span residues 1979-1999 (ATIS…GYSV), 2035-2055 (FIYD…IIAI), 2072-2092 (LLLL…AGLF), and 2103-2123 (VCVN…VYFL). The N-linked (GlcNAc...) asparagine glycan is linked to N2178. The helical transmembrane segment at 2187 to 2207 (GAMFVALVSQGTMFFSLRLLI) threads the bilayer. N-linked (GlcNAc...) asparagine glycans are attached at residues N2208 and N2223. An ABC transporter 2 domain is found at 2254–2489 (VQLYCLTKTY…FGRGFTVKVH (236 aa)). The helical transmembrane segment at 2270 to 2290 (IIAVNNISIGIPAGECFGLLG) threads the bilayer. 2290–2297 (GVNGAGKT) serves as a coordination point for ATP. 3 N-linked (GlcNAc...) asparagine glycosylation sites follow: N2318, N2542, and N2547. Residues 2571 to 2595 (SYETADTSSQGSTISVDSQDDQMES) are disordered. The segment covering 2574 to 2587 (TADTSSQGSTISVD) has biased composition (polar residues).

It belongs to the ABC transporter superfamily. ABCA family. In terms of assembly, interacts with NR1H2 and ABCA1; this interaction is required for ABCA1 localization to the cell surface and is necessary for its normal activity and stability. As to expression, mainly expressed in the stomach, placenta, testis and fetal brain. Expressed in the upper epidermal layers, mainly the granular layers, of skin. Expressed throughout the normal interfollicular epidermis with prominent expression in the stratum granulosum. Expressed in alpha and beta cells of pancreatic islets.

It is found in the cytoplasmic vesicle. The protein localises to the secretory vesicle membrane. It localises to the golgi apparatus membrane. It carries out the reaction ATP + H2O + phospholipidSide 1 = ADP + phosphate + phospholipidSide 2.. The catalysed reaction is a beta-D-glucosylceramide(in) + ATP + H2O = a beta-D-glucosylceramide(out) + ADP + phosphate + H(+). Functionally, transports lipids such as glucosylceramides from the outer to the inner leaflet of lamellar granules (LGs) membrane, whereby the lipids are finally transported to the keratinocyte periphery via the trans-Golgi network and LGs and released to the apical surface of the granular keratinocytes to form lipid lamellae in the stratum corneum of the epidermis, which is essential for skin barrier function. In the meantime, participates in the transport of the lamellar granules-associated proteolytic enzymes, in turn regulates desquamation and keratinocyte differentiation. Furthermore, is essential for the regulation of cellular cholesterol homeostasis by regulating ABCA1-dependent cholesterol efflux from macrophages through interaction with NR1H2 and ABCA1. Plays pleiotropic roles in regulating glucose stimulated insulin secretion from beta cells, regulating the morphology and fusion of insulin granules, lipid raft abundance and the actin cytoskeleton. Also involved in lung surfactant biogenesis. The sequence is that of Glucosylceramide transporter ABCA12 from Homo sapiens (Human).